The sequence spans 425 residues: Light-independent protochlorophyllide reductase subunit N (425 aa).

Cys-17, Cys-42, and Cys-103 together coordinate [4Fe-4S] cluster.

This sequence belongs to the BchN/ChlN family. In terms of assembly, protochlorophyllide reductase is composed of three subunits; ChlL, ChlN and ChlB. Forms a heterotetramer of two ChlB and two ChlN subunits. It depends on [4Fe-4S] cluster as a cofactor.

It catalyses the reaction chlorophyllide a + oxidized 2[4Fe-4S]-[ferredoxin] + 2 ADP + 2 phosphate = protochlorophyllide a + reduced 2[4Fe-4S]-[ferredoxin] + 2 ATP + 2 H2O. It functions in the pathway porphyrin-containing compound metabolism; chlorophyll biosynthesis (light-independent). Component of the dark-operative protochlorophyllide reductase (DPOR) that uses Mg-ATP and reduced ferredoxin to reduce ring D of protochlorophyllide (Pchlide) to form chlorophyllide a (Chlide). This reaction is light-independent. The NB-protein (ChlN-ChlB) is the catalytic component of the complex. The sequence is that of Light-independent protochlorophyllide reductase subunit N from Synechococcus sp. (strain CC9605).